Reading from the N-terminus, the 65-residue chain is Small ribosomal subunit protein bS21 (65 aa).

A compositionally biased stretch (basic residues) spans 46 to 57 (RLKRSRSKRRAQ). Positions 46-65 (RLKRSRSKRRAQRANEERNS) are disordered.

This sequence belongs to the bacterial ribosomal protein bS21 family.

In Chlorobaculum tepidum (strain ATCC 49652 / DSM 12025 / NBRC 103806 / TLS) (Chlorobium tepidum), this protein is Small ribosomal subunit protein bS21.